A 481-amino-acid polypeptide reads, in one-letter code: Surface lipoprotein assembly modifier 2 (481 aa).

Residues 1–24 (MKNGVKQLFLLSLIGLSLTNVAWA) form the signal peptide. The segment at 24 to 192 (AEVARPKNDT…QYLLTLNQRN (169 aa)) is N-terminal domain. A C-terminal probable beta barrel region spans residues 193–481 (QWIWQVGLNF…RIYLEIGKIF (289 aa)). Beta stranded transmembrane passes span 194–204 (WIWQVGLNFLN), 223–243 (AWEKESGQGVGYSLSVEKKWP), 248–257 (FFSKTMFNGN), 271–281 (TVRIGGGLGYQ), 285–295 (VEVSLFPFQEK), 315–325 (LGIRLENVDWL), 329–339 (WQISTALEYGE), 353–363 (YFVSSTLFYLP), 368–377 (FWFVGMDFHR), 390–399 (KTLRLGWGQD), 404–414 (ISSRLTFSYAN), 432–441 (YTTTITLWHR), 448–458 (LTPKLSWDYQK), and 471–481 (NRIYLEIGKIF).

Belongs to the Slam family.

The protein resides in the cell outer membrane. Required for correct export to the cell surface of some cell outer membrane lipoproteins. The chain is Surface lipoprotein assembly modifier 2 from Haemophilus influenzae (strain ATCC 51907 / DSM 11121 / KW20 / Rd).